A 938-amino-acid polypeptide reads, in one-letter code: MKIPNIGNVMNKFEILGVVGEGAYGVVLKCRHKETHEIVAIKKFKDSEENEEVKETTLRELKMLRTLKQENIVELKEAFRRRGKLYLVFEYVEKNMLELLEEMPNGVPPEKVKSYIYQLIKAIHWCHKNDIVHRDIKPENLLISHNDVLKLCDFGFARNLSEGNNANYTEYVATRWYRSPELLLGAPYGKSVDMWSVGCILGELSDGQPLFPGESEIDQLFTIQKVLGPLPSEQMKLFYSNPRFHGLRFPAVNHPQSLERRYLGILNSVLLDLMKNLLKLDPADRYLTEQCLNHPTFQTQRLLDRSPSRSTKRKPYHVESSTLSNRNQSTKGAALQTHHRSNSKDIQNLSVGLPRAEEGLPANESFLNGNLAGATLSPMHTKTYQASTQPGSSSKDLTNNNIPHLLSPKEAKSKTEFDFNIDTKPSEGPGTKYLKSSTRSQQNRHSFMESSQSKAGTLQPSEKQSRHSYIDTIPQSSRSPSYRTKAKSHGALSDSKSVSNLSEARAQITETNTSRYFPSSCLDLNSPTSPTPTRHTDTRTLLSPSGRNNRNEGTLDSRRTTTRHSKTMEELKLPEHMDSSHSHSLSAPHESFSYGLGYTSPFSSQQRPHRHSMYVTRDKVRAKGLDGSLSIGQGMAARANSLQLLSPQPGEQLPPEMTVARPSVKESSREGASSFHTRQKSEGGVYHDPHSDDGTAPKENRHLYNDPVPRRVGSFYRVPSPRPDNSFHENNVSTRVSSLPSDSSSGTNHSKRQPGFDPWKSPENISHADQLKEKEKQGFFRSMKKKKKKTQTVPNTDGPDLLTLQKAIHSSSTASSRPKEWRPEKLSDLQTQSQPLKSLRKLLHLSSSTNHPASSDPRFQPLTAQQAKNSFSEIRIHPLSQATGGSSNIRQEPTPKGRPALQLPGSSLLRYNGWKHSRSRSSQPDEVIFLASHEKWKQ.

The Protein kinase domain occupies 13–297 (FEILGVVGEG…TEQCLNHPTF (285 aa)). ATP contacts are provided by residues 19–27 (VGEGAYGVV) and K42. D135 (proton acceptor) is an active-site residue. Disordered regions lie at residues 298–348 (QTQR…DIQN), 382–566 (KTYQ…RHSK), 646–865 (SPQP…LTAQ), and 877–938 (HPLS…KWKQ). Polar residues-rich tracts occupy residues 319–331 (ESST…QSTK) and 382–402 (KTYQ…NNNI). S407 is modified (phosphoserine). Residues 407–417 (SPKEAKSKTEF) show a composition bias toward basic and acidic residues. Composition is skewed to polar residues over residues 434 to 462 (LKSS…QPSE), 473 to 482 (IPQSSRSPSY), and 494 to 548 (DSKS…SGRN). Phosphoserine is present on S479. Basic and acidic residues-rich tracts occupy residues 549-559 (NRNEGTLDSRR) and 679-704 (QKSE…RHLY). A Phosphoserine modification is found at S720. Residues 728–748 (HENNVSTRVSSLPSDSSSGTN) are compositionally biased toward polar residues. S761 carries the phosphoserine modification. Basic and acidic residues-rich tracts occupy residues 769 to 778 (DQLKEKEKQG) and 817 to 827 (RPKEWRPEKLS). Over residues 880-891 (SQATGGSSNIRQ) the composition is skewed to polar residues.

This sequence belongs to the protein kinase superfamily. CMGC Ser/Thr protein kinase family. CDC2/CDKX subfamily. In terms of assembly, interacts with MECP2. In terms of processing, autophosphorylated.

It localises to the nucleus. The protein resides in the cytoplasm. It is found in the cytoskeleton. The protein localises to the cilium basal body. Its subcellular location is the microtubule organizing center. It localises to the centrosome. The catalysed reaction is L-seryl-[protein] + ATP = O-phospho-L-seryl-[protein] + ADP + H(+). It catalyses the reaction L-threonyl-[protein] + ATP = O-phospho-L-threonyl-[protein] + ADP + H(+). Its function is as follows. Mediates phosphorylation of MECP2. May regulate ciliogenesis. The protein is Cyclin-dependent kinase-like 5 of Mus musculus (Mouse).